Consider the following 109-residue polypeptide: Cell division protein ZapA (109 aa).

Positions 21–97 form a coiled coil; sequence PDQRDALNQA…QTIEQALLDQ (77 aa).

Belongs to the ZapA family. Type 1 subfamily. Homodimer. Interacts with FtsZ.

The protein resides in the cytoplasm. Activator of cell division through the inhibition of FtsZ GTPase activity, therefore promoting FtsZ assembly into bundles of protofilaments necessary for the formation of the division Z ring. It is recruited early at mid-cell but it is not essential for cell division. The polypeptide is Cell division protein ZapA (Salmonella agona (strain SL483)).